We begin with the raw amino-acid sequence, 1486 residues long: Glutamate synthase [NADPH] large chain (1486 aa).

A propeptide spanning residues 1 to 11 is cleaved from the precursor; it reads MLYDKSLERDN. The Nucleophile role is filled by Cys-12. Positions 12–402 constitute a Glutamine amidotransferase type-2 domain; the sequence is CGFGLIAHIE…PGELMVIDTR (391 aa). Residue 1049-1101 coordinates FMN; the sequence is LVETQQALVANGLRHKIRLQVDGGLKTGVDIIKAAILGAESFGFGTGPMVALG. [3Fe-4S] cluster is bound by residues Cys-1102, Cys-1108, and Cys-1113.

The protein belongs to the glutamate synthase family. As to quaternary structure, aggregate of 4 catalytic active heterodimers, consisting of a large and a small subunit. The cofactor is [3Fe-4S] cluster. FAD is required as a cofactor. FMN serves as cofactor.

The enzyme catalyses 2 L-glutamate + NADP(+) = L-glutamine + 2-oxoglutarate + NADPH + H(+). It participates in amino-acid biosynthesis; L-glutamate biosynthesis via GLT pathway; L-glutamate from 2-oxoglutarate and L-glutamine (NADP(+) route): step 1/1. Its pathway is energy metabolism; nitrogen metabolism. In terms of biological role, catalyzes the conversion of L-glutamine and 2-oxoglutarate into two molecules of L-glutamate. This is Glutamate synthase [NADPH] large chain (gltB) from Escherichia coli (strain K12).